The sequence spans 626 residues: Mitogen-activated protein kinase kinase kinase 3 (626 aa).

The 80-residue stretch at 44-123 folds into the PB1 domain; sequence DVRIKFEHNG…KSLRILLLSQ (80 aa). 3 stretches are compositionally biased toward polar residues: residues 146–155, 165–174, and 219–232; these read QSAGDINTIY, LSVSSQNPGR, and SAEN…QSLD. 2 disordered regions span residues 146–184 and 218–262; these read QSAG…YVPE and SSAE…SDRE. Phosphoserine is present on serine 147. At serine 166 the chain carries Phosphoserine; by SGK1. A phosphoserine mark is found at serine 250 and serine 312. Serine 337 is subject to Phosphoserine; by SGK1. At serine 340 the chain carries Phosphoserine. The Protein kinase domain maps to 362-622; sequence WRRGKLLGQG…AEELLTHHFA (261 aa). ATP is bound by residues 368–376 and lysine 391; that span reads LGQGAFGRV. Aspartate 489 serves as the catalytic Proton acceptor.

This sequence belongs to the protein kinase superfamily. STE Ser/Thr protein kinase family. MAP kinase kinase kinase subfamily. Binds both upstream activators and downstream substrates in multimolecular complexes. Part of a complex with MAP2K3, RAC1 and CCM2. Interacts with MAP2K5 and SPAG9. Mg(2+) is required as a cofactor. Post-translationally, phosphorylation at Ser-166 and Ser-337 by SGK1 inhibits its activity.

The catalysed reaction is L-seryl-[protein] + ATP = O-phospho-L-seryl-[protein] + ADP + H(+). It catalyses the reaction L-threonyl-[protein] + ATP = O-phospho-L-threonyl-[protein] + ADP + H(+). Its activity is regulated as follows. Activated by phosphorylation on Thr-530. Its function is as follows. Component of a protein kinase signal transduction cascade. Mediates activation of the NF-kappa-B, AP1 and DDIT3 transcriptional regulators. This chain is Mitogen-activated protein kinase kinase kinase 3 (MAP3K3), found in Homo sapiens (Human).